Here is a 189-residue protein sequence, read N- to C-terminus: Movement protein (189 aa).

Belongs to the tombusvirus/aureusvirus movement protein p22 family. As to quaternary structure, interacts with host protein HFI22. Phosphorylated.

The protein localises to the host membrane. Its function is as follows. Transports viral genome to neighboring plant cells directly through plasmosdesmata, without any budding. The movement protein allows efficient cell to cell propagation, by bypassing the host cell wall barrier. The chain is Movement protein from Capsicum annuum (Capsicum pepper).